Here is an 844-residue protein sequence, read N- to C-terminus: Protein translocase subunit SecA (844 aa).

Residues glutamine 87, 105-109, and aspartate 495 each bind ATP; that span reads GEGKT. Residues 783–800 are compositionally biased toward basic and acidic residues; sequence QAPPEELKQEFKHKEEPK. Residues 783-844 form a disordered region; the sequence is QAPPEELKQE…GQKYKKCCGA (62 aa). Residues 802-811 show a composition bias toward polar residues; that stretch reads LNYSGAQKET. Over residues 816 to 826 the composition is skewed to basic and acidic residues; that stretch reads PERRGEPKVGR. Cysteine 830, cysteine 832, cysteine 841, and cysteine 842 together coordinate Zn(2+).

Belongs to the SecA family. As to quaternary structure, monomer and homodimer. Part of the essential Sec protein translocation apparatus which comprises SecA, SecYEG and auxiliary proteins SecDF-YajC and YidC. The cofactor is Zn(2+).

It localises to the cell inner membrane. Its subcellular location is the cytoplasm. The enzyme catalyses ATP + H2O + cellular proteinSide 1 = ADP + phosphate + cellular proteinSide 2.. Functionally, part of the Sec protein translocase complex. Interacts with the SecYEG preprotein conducting channel. Has a central role in coupling the hydrolysis of ATP to the transfer of proteins into and across the cell membrane, serving as an ATP-driven molecular motor driving the stepwise translocation of polypeptide chains across the membrane. The protein is Protein translocase subunit SecA of Nitratidesulfovibrio vulgaris (strain DSM 19637 / Miyazaki F) (Desulfovibrio vulgaris).